An 87-amino-acid chain; its full sequence is ParB-like nuclease domain-containing protein YnaK (87 aa).

This chain is ParB-like nuclease domain-containing protein YnaK (ynaK), found in Escherichia coli (strain K12).